The following is a 951-amino-acid chain: Protein translocase subunit SecA 1 (951 aa).

Residues Gln87, 105–109 (GEGKT), and Asp525 each bind ATP. The segment at 911 to 942 (PVVSADRSSRDPGNPASWGKVGRNEDCPCGSG) is disordered. Positions 937, 939, 948, and 949 each coordinate Zn(2+).

The protein belongs to the SecA family. As to quaternary structure, monomer and homodimer. Part of the essential Sec protein translocation apparatus which comprises SecA, SecYEG and auxiliary proteins SecDF-YajC and YidC. Zn(2+) serves as cofactor.

It is found in the cell inner membrane. The protein resides in the cytoplasm. It catalyses the reaction ATP + H2O + cellular proteinSide 1 = ADP + phosphate + cellular proteinSide 2.. In terms of biological role, part of the Sec protein translocase complex. Interacts with the SecYEG preprotein conducting channel. Has a central role in coupling the hydrolysis of ATP to the transfer of proteins into and across the cell membrane, serving both as a receptor for the preprotein-SecB complex and as an ATP-driven molecular motor driving the stepwise translocation of polypeptide chains across the membrane. This is Protein translocase subunit SecA 1 from Nitrobacter hamburgensis (strain DSM 10229 / NCIMB 13809 / X14).